Consider the following 229-residue polypeptide: MLKYLNQSEAINVDLELFNEYKFSVDQLMELAGLSCAHAVAKCFPAKDFARVLVCCGPGNNGGDGLVCARHLALMGYTPAIYYPKPTPKPLYENLAHQCQRMEICSITECPRVEEAADSYDLIVDALFGFSFKPPVRADFVSVVELLQQTKLPIASVDIPSGWDVEQGKLNDCDLEPTLLISLTAPKLCAKHFKGKHHFLGGRFVPPALQRKYELNLPAYPGNELCLEL.

The 208-residue stretch at 10 to 217 (AINVDLELFN…ALQRKYELNL (208 aa)) folds into the YjeF N-terminal domain. Residue 60–64 (NNGGD) participates in (6S)-NADPHX binding. K(+) is bound by residues Asn-61 and Asp-125. (6S)-NADPHX is bound by residues 129–135 (GFSFKPP) and Asp-158. Ser-161 contacts K(+).

This sequence belongs to the NnrE/AIBP family. It depends on K(+) as a cofactor.

The enzyme catalyses (6R)-NADHX = (6S)-NADHX. It carries out the reaction (6R)-NADPHX = (6S)-NADPHX. In terms of biological role, catalyzes the epimerization of the S- and R-forms of NAD(P)HX, a damaged form of NAD(P)H that is a result of enzymatic or heat-dependent hydration. This is a prerequisite for the S-specific NAD(P)H-hydrate dehydratase to allow the repair of both epimers of NAD(P)HX. The protein is NAD(P)H-hydrate epimerase of Drosophila virilis (Fruit fly).